Consider the following 450-residue polypeptide: Signal recognition particle protein (450 aa).

GTP-binding positions include 106–113 (GLQGSGKT), 188–192 (DTAGR), and 246–249 (TKLD).

This sequence belongs to the GTP-binding SRP family. SRP54 subfamily. As to quaternary structure, part of the signal recognition particle protein translocation system, which is composed of SRP and FtsY.

It localises to the cytoplasm. The enzyme catalyses GTP + H2O = GDP + phosphate + H(+). Its function is as follows. Involved in targeting and insertion of nascent membrane proteins into the cytoplasmic membrane. Binds to the hydrophobic signal sequence of the ribosome-nascent chain (RNC) as it emerges from the ribosomes. The SRP-RNC complex is then targeted to the cytoplasmic membrane where it interacts with the SRP receptor FtsY. This Mycoplasma pneumoniae (strain ATCC 29342 / M129 / Subtype 1) (Mycoplasmoides pneumoniae) protein is Signal recognition particle protein.